A 1012-amino-acid polypeptide reads, in one-letter code: Isoleucine--tRNA ligase, mitochondrial (1012 aa).

Residues 1 to 48 (MHWGLCPRGPGAAAVAAAGSFWGPARLPSRLGCLGMTRRLVVRSVAGA) constitute a mitochondrion transit peptide. An N6-succinyllysine modification is found at lysine 56. Lysine 74 carries the N6-acetyllysine; alternate modification. Residue lysine 74 is modified to N6-succinyllysine; alternate. Residues 116-126 (PYANGDPHVGH) carry the 'HIGH' region motif. N6-succinyllysine is present on lysine 194. At lysine 233 the chain carries N6-acetyllysine. An N6-acetyllysine; alternate modification is found at lysine 241. Lysine 241 is modified (N6-succinyllysine; alternate). N6-succinyllysine is present on residues lysine 479 and lysine 500. ATP contacts are provided by lysine 664 and lysine 667. Residues 664–668 (KMSKS) carry the 'KMSKS' region motif. An N6-acetyllysine modification is found at lysine 725. N6-acetyllysine; alternate occurs at positions 775 and 781. 2 positions are modified to N6-succinyllysine; alternate: lysine 775 and lysine 781.

Belongs to the class-I aminoacyl-tRNA synthetase family.

It localises to the mitochondrion matrix. It catalyses the reaction tRNA(Ile) + L-isoleucine + ATP = L-isoleucyl-tRNA(Ile) + AMP + diphosphate. Aminoacyl-tRNA synthetase that catalyzes the specific attachment of isoleucine to its cognate tRNA (tRNA(Ile)). The chain is Isoleucine--tRNA ligase, mitochondrial from Mus musculus (Mouse).